Here is a 145-residue protein sequence, read N- to C-terminus: Histone H2B.1, sperm (145 aa).

The segment at 1–52 is disordered; that stretch reads MPSQKSPTKRSPTKRSPTKRSPQKGGKGGKGAKRGGKAGKRRRGVQVKRRRR. 4 short sequence motifs (SPKK motif) span residues 6 to 9, 11 to 14, 16 to 19, and 21 to 24; these read SPTK and SPQK. 2 stretches are compositionally biased toward basic residues: residues 7-22 and 30-52; these read PTKRSPTKRSPTKRSP and KGAKRGGKAGKRRRGVQVKRRRR. A phosphoserine mark is found at Ser-16 and Ser-21. The O-linked (GlcNAc) serine glycan is linked to Ser-132. Residue Lys-140 forms a Glycyl lysine isopeptide (Lys-Gly) (interchain with G-Cter in ubiquitin) linkage.

Belongs to the histone H2B family. The nucleosome is a histone octamer containing two molecules each of H2A, H2B, H3 and H4 assembled in one H3-H4 heterotetramer and two H2A-H2B heterodimers. The octamer wraps approximately 147 bp of DNA. In terms of processing, monoubiquitination of Lys-140 gives a specific tag for epigenetic transcriptional activation and is also prerequisite for histone H3 'Lys-4' and 'Lys-79' methylation. Phosphorylated on SPKK motifs 3 and 4; which may regulate DNA binding. Dephosphorylated during maturation of spermatids to mature sperm and rephosphorylated at fertilization. Post-translationally, glcNAcylation at Ser-132 promotes monoubiquitination of Lys-140. It fluctuates in response to extracellular glucose, and associates with transcribed genes.

It localises to the nucleus. Its subcellular location is the chromosome. In terms of biological role, core component of nucleosome. Nucleosomes wrap and compact DNA into chromatin, limiting DNA accessibility to the cellular machineries which require DNA as a template. Histones thereby play a central role in transcription regulation, DNA repair, DNA replication and chromosomal stability. DNA accessibility is regulated via a complex set of post-translational modifications of histones, also called histone code, and nucleosome remodeling. The protein is Histone H2B.1, sperm of Parechinus angulosus (Angulate sea urchin).